The primary structure comprises 805 residues: Sucrose synthase (805 aa).

Positions Met-275 to Thr-752 are GT-B glycosyltransferase.

The protein belongs to the glycosyltransferase 1 family. Plant sucrose synthase subfamily. In terms of tissue distribution, expression is at least 10-fold higher in tubers compared to photosynthetically active tissues.

The catalysed reaction is an NDP-alpha-D-glucose + D-fructose = a ribonucleoside 5'-diphosphate + sucrose + H(+). Sucrose-cleaving enzyme that provides UDP-glucose and fructose for various metabolic pathways. The polypeptide is Sucrose synthase (Solanum tuberosum (Potato)).